The following is a 494-amino-acid chain: Alpha-amylase-related protein (494 aa).

Residues 1-20 form the signal peptide; the sequence is MIKFALALTLCLAGASLSLA. Glutamine 21 bears the Pyrrolidone carboxylic acid mark. An intrachain disulfide couples cysteine 48 to cysteine 104. Residues asparagine 118, glutamine 169, and aspartate 178 each contribute to the Ca(2+) site. Cysteine 157 and cysteine 171 form a disulfide bridge. Position 206 (arginine 206) interacts with chloride. The Nucleophile role is filled by aspartate 208. Histidine 212 contributes to the Ca(2+) binding site. The Proton donor role is filled by glutamate 245. 2 residues coordinate chloride: asparagine 308 and arginine 343. 3 cysteine pairs are disulfide-bonded: cysteine 376-cysteine 382, cysteine 418-cysteine 441, and cysteine 448-cysteine 460.

It belongs to the glycosyl hydrolase 13 family. In terms of assembly, monomer. Ca(2+) is required as a cofactor. The cofactor is chloride.

The protein resides in the secreted. The catalysed reaction is Endohydrolysis of (1-&gt;4)-alpha-D-glucosidic linkages in polysaccharides containing three or more (1-&gt;4)-alpha-linked D-glucose units.. This chain is Alpha-amylase-related protein (Amyrel), found in Drosophila lini (Fruit fly).